Reading from the N-terminus, the 126-residue chain is Small ribosomal subunit protein bS6 (126 aa).

Positions Leu-104 to Ala-126 are disordered. Positions Ala-105–Phe-120 are enriched in basic and acidic residues.

Belongs to the bacterial ribosomal protein bS6 family.

Its function is as follows. Binds together with bS18 to 16S ribosomal RNA. This chain is Small ribosomal subunit protein bS6, found in Caulobacter vibrioides (strain ATCC 19089 / CIP 103742 / CB 15) (Caulobacter crescentus).